We begin with the raw amino-acid sequence, 366 residues long: Ribosomal RNA large subunit methyltransferase M (366 aa).

S-adenosyl-L-methionine-binding positions include serine 188, 221-224 (CPGG), aspartate 240, aspartate 260, and aspartate 277. Residue lysine 306 is the Proton acceptor of the active site.

This sequence belongs to the class I-like SAM-binding methyltransferase superfamily. RNA methyltransferase RlmE family. RlmM subfamily. As to quaternary structure, monomer.

It is found in the cytoplasm. It catalyses the reaction cytidine(2498) in 23S rRNA + S-adenosyl-L-methionine = 2'-O-methylcytidine(2498) in 23S rRNA + S-adenosyl-L-homocysteine + H(+). Catalyzes the 2'-O-methylation at nucleotide C2498 in 23S rRNA. The chain is Ribosomal RNA large subunit methyltransferase M from Photorhabdus sp. (strain Az29).